Reading from the N-terminus, the 332-residue chain is Holliday junction branch migration complex subunit RuvB (332 aa).

The large ATPase domain (RuvB-L) stretch occupies residues 1 to 182; that stretch reads MKLNKNSELK…FGLILKLNYY (182 aa). Residues Leu-21, Arg-22, Gly-63, Lys-66, Thr-67, Thr-68, 129 to 131, Arg-172, Tyr-182, and Arg-219 each bind ATP; that span reads EDY. Residue Thr-67 coordinates Mg(2+). A small ATPAse domain (RuvB-S) region spans residues 183–253; the sequence is SEDELELIIK…ISEIALEKLT (71 aa). The tract at residues 256-332 is head domain (RuvB-H); the sequence is KNGLDDADYT…FKLFKNDKIK (77 aa). DNA-binding residues include Arg-311 and Arg-316.

This sequence belongs to the RuvB family. Homohexamer. Forms an RuvA(8)-RuvB(12)-Holliday junction (HJ) complex. HJ DNA is sandwiched between 2 RuvA tetramers; dsDNA enters through RuvA and exits via RuvB. An RuvB hexamer assembles on each DNA strand where it exits the tetramer. Each RuvB hexamer is contacted by two RuvA subunits (via domain III) on 2 adjacent RuvB subunits; this complex drives branch migration. In the full resolvosome a probable DNA-RuvA(4)-RuvB(12)-RuvC(2) complex forms which resolves the HJ.

It is found in the cytoplasm. It catalyses the reaction ATP + H2O = ADP + phosphate + H(+). The RuvA-RuvB-RuvC complex processes Holliday junction (HJ) DNA during genetic recombination and DNA repair, while the RuvA-RuvB complex plays an important role in the rescue of blocked DNA replication forks via replication fork reversal (RFR). RuvA specifically binds to HJ cruciform DNA, conferring on it an open structure. The RuvB hexamer acts as an ATP-dependent pump, pulling dsDNA into and through the RuvAB complex. RuvB forms 2 homohexamers on either side of HJ DNA bound by 1 or 2 RuvA tetramers; 4 subunits per hexamer contact DNA at a time. Coordinated motions by a converter formed by DNA-disengaged RuvB subunits stimulates ATP hydrolysis and nucleotide exchange. Immobilization of the converter enables RuvB to convert the ATP-contained energy into a lever motion, pulling 2 nucleotides of DNA out of the RuvA tetramer per ATP hydrolyzed, thus driving DNA branch migration. The RuvB motors rotate together with the DNA substrate, which together with the progressing nucleotide cycle form the mechanistic basis for DNA recombination by continuous HJ branch migration. Branch migration allows RuvC to scan DNA until it finds its consensus sequence, where it cleaves and resolves cruciform DNA. This is Holliday junction branch migration complex subunit RuvB from Phytoplasma mali (strain AT).